We begin with the raw amino-acid sequence, 1894 residues long: Adenylate kinase 9 (1894 aa).

The adenylate kinase 1 stretch occupies residues 32-286 (TCFIIFGKPG…LFMTVIERLK (255 aa)). 41-46 (GAGKTT) lines the ATP pocket. The interval 61-90 (EALSVLEEHIAAEKETGAMLQSLLVSGHSI) is NMP 1. 117–120 (EMPS) contacts AMP. Positions 161-206 (GQRQHSTTGYVYTREQWDPEIIESRRRKKRDFPKEGKSEEEEEEEE) are LID 1. The interval 188–211 (KKRDFPKEGKSEEEEEEEEQEEEE) is disordered. The span at 198-211 (SEEEEEEEEQEEEE) shows a compositional bias: acidic residues. Arginine 230 provides a ligand contact to AMP. Positions 451 to 478 (IKVVQQRLLNEKQAKQQEERTLKELQVQ) form a coiled coil. The disordered stretch occupies residues 492–533 (SEELPSLENTGSKLSSLEIGQEDKSKSETTITGDQVKDVSTE). A coiled-coil region spans residues 651–691 (LERLQEEAQAKKREEEEIRKVKEEELRLEEEKQRLMELATK). 2 disordered regions span residues 710–789 (PYPD…LGSE) and 876–911 (EEEAEDYQAETEIDEEQEEEEEEEEEGEEKIKEKRR). Acidic residues predominate over residues 715–736 (PDNEAEEEVEDSEIHEESEAQE). Composition is skewed to basic and acidic residues over residues 757-768 (EGDHEPEAEFKP) and 777-789 (ETEKDPKEGLGSE). The segment covering 876-903 (EEEAEDYQAETEIDEEQEEEEEEEEEGE) has biased composition (acidic residues). Positions 976-1187 (LRICLLGPHG…VAKRRAELIL (212 aa)) are adenylate kinase 2. Residue 985-990 (GSGKTV) coordinates ATP. The interval 1005 to 1036 (QFDEFLQEKMLLKAERKFGPEFEDDSEEEQLV) is NMP 2. Residues 1034-1036 (QLV) and 1063-1066 (VQLT) contribute to the AMP site. The LID 2 stretch occupies residues 1108–1128 (DGFPRHPEEAQFLGERGFFPD). The segment covering 1223–1241 (EFPKDEEEMSEEDEEQEAD) has biased composition (acidic residues). Residues 1223 to 1243 (EFPKDEEEMSEEDEEQEADAT) are disordered. The adenylate kinase 3 stretch occupies residues 1395–1584 (VRIMIVGPPK…VWNEVLKDIQ (190 aa)). 1404–1409 (KSGKTT) serves as a coordination point for ATP. Positions 1424 to 1455 (SVGDALRGMLNNHPDSELSLMLNWHLHKGKTV) are NMP 3. Residues arginine 1430, 1482–1485 (GYPV), and glutamine 1489 contribute to the AMP site. Residues 1519-1533 (LEKKTEQSMSYPLHN) form an LID 3 region.

This sequence belongs to the adenylate kinase family. Highly expressed in the testis.

Its subcellular location is the cytoplasm. It is found in the nucleus. The protein resides in the cell projection. It localises to the cilium. The protein localises to the flagellum. It catalyses the reaction a ribonucleoside 5'-phosphate + ATP = a ribonucleoside 5'-diphosphate + ADP. The catalysed reaction is AMP + ATP = 2 ADP. The enzyme catalyses GTP + AMP = GDP + ADP. It carries out the reaction CMP + ATP = CDP + ADP. It catalyses the reaction GTP + CMP = CDP + GDP. The catalysed reaction is dAMP + ATP = dADP + ADP. The enzyme catalyses dCMP + ATP = dCDP + ADP. It carries out the reaction a ribonucleoside 5'-diphosphate + ATP = a ribonucleoside 5'-triphosphate + ADP. It catalyses the reaction CDP + ATP = CTP + ADP. The catalysed reaction is CDP + GTP = CTP + GDP. The enzyme catalyses GDP + ATP = GTP + ADP. It carries out the reaction UDP + ATP = UTP + ADP. It catalyses the reaction GTP + UDP = UTP + GDP. The catalysed reaction is dTDP + GTP = dTTP + GDP. The enzyme catalyses dCDP + ATP = dCTP + ADP. It carries out the reaction dCDP + GTP = dCTP + GDP. It catalyses the reaction dGDP + ATP = dGTP + ADP. The catalysed reaction is dTDP + ATP = dTTP + ADP. The enzyme catalyses dADP + GTP = dATP + GDP. Its function is as follows. Broad-specificity nucleoside phosphate kinase involved in cellular nucleotide homeostasis by catalyzing nucleoside-phosphate interconversions. Similar to other adenylate kinases, preferentially catalyzes the phosphorylation of the nucleoside monophosphate AMP with ATP as phosphate donor to produce ADP. In vitro, can also catalyze the phosphorylation of CMP, dAMP and dCMP and use GTP as an alternate phosphate donor. Moreover, exhibits a diphosphate kinase activity, producing ATP, CTP, GTP, UTP, TTP, dATP, dCTP and dGTP from the corresponding diphosphate substrates with either ATP or GTP as phosphate donors. For this activity shows the following substrate preference CDP &gt; UDP &gt; ADP &gt; TDP. This Mus musculus (Mouse) protein is Adenylate kinase 9.